The chain runs to 440 residues: Lipopolysaccharide-processing protein LpsZ (440 aa).

This sequence to E.coli capsule polysaccharide export protein KpsC.

It is found in the cytoplasm. Involved in the invasion of nitrogen fixation nodules. May be involved in the biosynthesis of lipopolysaccharides as an enzyme or a regulatory protein. The polypeptide is Lipopolysaccharide-processing protein LpsZ (lpsZ) (Rhizobium meliloti (Ensifer meliloti)).